The sequence spans 326 residues: Nine-heme cytochrome c (326 aa).

Positions Met-1–Ala-30 are cleaved as a signal peptide. Heme is bound by residues His-67, His-70, Cys-77, Cys-80, His-81, His-82, Cys-89, Cys-92, His-93, His-111, Cys-127, Cys-130, His-131, Cys-141, Cys-144, His-145, Cys-157, Cys-160, His-161, His-227, His-230, His-248, Cys-255, Cys-258, His-259, His-260, Cys-271, Cys-274, His-275, His-294, Cys-297, Cys-300, His-301, Cys-314, Cys-317, and His-318.

Monomer. In terms of processing, binds 9 heme groups per subunit.

The protein resides in the periplasm. Functionally, may form part of a transmembrane redox complex through which electrons are transferred to the cytoplasm for reduction of sulfate. The chain is Nine-heme cytochrome c from Desulfovibrio desulfuricans (strain ATCC 27774 / DSM 6949 / MB).